We begin with the raw amino-acid sequence, 366 residues long: tRNA/tmRNA (uracil-C(5))-methyltransferase (366 aa).

The S-adenosyl-L-methionine site is built by glutamine 190, tyrosine 218, asparagine 223, glutamate 239, and aspartate 299. Residue cysteine 324 is the Nucleophile of the active site. Glutamate 358 functions as the Proton acceptor in the catalytic mechanism.

The protein belongs to the class I-like SAM-binding methyltransferase superfamily. RNA M5U methyltransferase family. TrmA subfamily.

It catalyses the reaction uridine(54) in tRNA + S-adenosyl-L-methionine = 5-methyluridine(54) in tRNA + S-adenosyl-L-homocysteine + H(+). It carries out the reaction uridine(341) in tmRNA + S-adenosyl-L-methionine = 5-methyluridine(341) in tmRNA + S-adenosyl-L-homocysteine + H(+). In terms of biological role, dual-specificity methyltransferase that catalyzes the formation of 5-methyluridine at position 54 (m5U54) in all tRNAs, and that of position 341 (m5U341) in tmRNA (transfer-mRNA). The sequence is that of tRNA/tmRNA (uracil-C(5))-methyltransferase from Salmonella newport (strain SL254).